The primary structure comprises 187 residues: Large ribosomal subunit protein uL5 (187 aa).

It belongs to the universal ribosomal protein uL5 family. Part of the 50S ribosomal subunit; part of the 5S rRNA/L5/L18/L25 subcomplex. Contacts the 5S rRNA and the P site tRNA. Forms a bridge to the 30S subunit in the 70S ribosome.

Functionally, this is one of the proteins that bind and probably mediate the attachment of the 5S RNA into the large ribosomal subunit, where it forms part of the central protuberance. In the 70S ribosome it contacts protein S13 of the 30S subunit (bridge B1b), connecting the 2 subunits; this bridge is implicated in subunit movement. Contacts the P site tRNA; the 5S rRNA and some of its associated proteins might help stabilize positioning of ribosome-bound tRNAs. In Malacoplasma penetrans (strain HF-2) (Mycoplasma penetrans), this protein is Large ribosomal subunit protein uL5.